The primary structure comprises 256 residues: Thiazole synthase (256 aa).

The active-site Schiff-base intermediate with DXP is the Lys-95. 1-deoxy-D-xylulose 5-phosphate contacts are provided by residues Gly-156, 182–183, and 204–205; these read AG and NT.

It belongs to the ThiG family. Homotetramer. Forms heterodimers with either ThiH or ThiS.

It is found in the cytoplasm. The enzyme catalyses [ThiS sulfur-carrier protein]-C-terminal-Gly-aminoethanethioate + 2-iminoacetate + 1-deoxy-D-xylulose 5-phosphate = [ThiS sulfur-carrier protein]-C-terminal Gly-Gly + 2-[(2R,5Z)-2-carboxy-4-methylthiazol-5(2H)-ylidene]ethyl phosphate + 2 H2O + H(+). It functions in the pathway cofactor biosynthesis; thiamine diphosphate biosynthesis. Its function is as follows. Catalyzes the rearrangement of 1-deoxy-D-xylulose 5-phosphate (DXP) to produce the thiazole phosphate moiety of thiamine. Sulfur is provided by the thiocarboxylate moiety of the carrier protein ThiS. In vitro, sulfur can be provided by H(2)S. This Citrobacter koseri (strain ATCC BAA-895 / CDC 4225-83 / SGSC4696) protein is Thiazole synthase.